A 102-amino-acid polypeptide reads, in one-letter code: Small ribosomal subunit protein uS10 (102 aa).

Belongs to the universal ribosomal protein uS10 family. In terms of assembly, part of the 30S ribosomal subunit.

In terms of biological role, involved in the binding of tRNA to the ribosomes. This is Small ribosomal subunit protein uS10 from Bifidobacterium adolescentis (strain ATCC 15703 / DSM 20083 / NCTC 11814 / E194a).